The sequence spans 928 residues: Dual serine/threonine and tyrosine protein kinase (928 aa).

Residues 1–14 (MEGDGVPWGSEPES) show a composition bias toward low complexity. Disordered stretches follow at residues 1-22 (MEGD…GGGG) and 55-81 (LRGS…AGDV). A coiled-coil region spans residues 394–430 (RKKENELYESLMNIANRKQEEMKDMIVETLNTMKEEL). Residues 651 to 905 (PKLGQELGRG…PLLGIVQPML (255 aa)) form the Protein kinase domain. Residues 657 to 665 (LGRGQYGVV) and Lys-680 each bind ATP. Asp-776 (proton acceptor) is an active-site residue.

It belongs to the protein kinase superfamily. Ser/Thr protein kinase family.

It localises to the cytoplasm. The protein resides in the cell membrane. Its subcellular location is the apical cell membrane. The protein localises to the basolateral cell membrane. It is found in the cell junction. The catalysed reaction is L-seryl-[protein] + ATP = O-phospho-L-seryl-[protein] + ADP + H(+). It carries out the reaction L-threonyl-[protein] + ATP = O-phospho-L-threonyl-[protein] + ADP + H(+). It catalyses the reaction L-tyrosyl-[protein] + ATP = O-phospho-L-tyrosyl-[protein] + ADP + H(+). Its function is as follows. Acts as a positive regulator of ERK phosphorylation downstream of fibroblast growth factor-receptor activation. Involved in the regulation of both caspase-dependent apoptosis and caspase-independent cell death. In the skin, it plays a predominant role in suppressing caspase-dependent apoptosis in response to UV stress in a range of dermal cell types. This Bos taurus (Bovine) protein is Dual serine/threonine and tyrosine protein kinase (DSTYK).